A 95-amino-acid polypeptide reads, in one-letter code: uncharacterized protein (95 aa).

A disordered region spans residues 1–73 (MAHFKDDLQT…AQQPSMRTEL (73 aa)). Polar residues-rich tracts occupy residues 42-52 (SNHSPSVQESP) and 62-73 (GSAQQPSMRTEL).

This is an uncharacterized protein from Homo sapiens (Human).